The chain runs to 694 residues: Polyphosphate kinase (694 aa).

Asn45 lines the ATP pocket. Mg(2+)-binding residues include Arg367 and Arg397. The Phosphohistidine intermediate role is filled by His427. Residues Tyr460, Arg553, and His580 each contribute to the ATP site.

The protein belongs to the polyphosphate kinase 1 (PPK1) family. It depends on Mg(2+) as a cofactor. Post-translationally, an intermediate of this reaction is the autophosphorylated ppk in which a phosphate is covalently linked to a histidine residue through a N-P bond.

The catalysed reaction is [phosphate](n) + ATP = [phosphate](n+1) + ADP. Functionally, catalyzes the reversible transfer of the terminal phosphate of ATP to form a long-chain polyphosphate (polyP). This chain is Polyphosphate kinase, found in Campylobacter jejuni subsp. jejuni serotype O:6 (strain 81116 / NCTC 11828).